A 688-amino-acid chain; its full sequence is Potassium-transporting ATPase ATP-binding subunit (688 aa).

Transmembrane regions (helical) follow at residues 35 to 55 (VMMV…VQFA), 62 to 82 (AVFS…ANLA), 219 to 239 (IALS…VVTL), and 260 to 280 (VLVA…LSAI). D313 functions as the 4-aspartylphosphate intermediate in the catalytic mechanism. ATP is bound by residues D350, E354, 383-390 (FSAQTRMS), and K401. The Mg(2+) site is built by D524 and D528. A run of 3 helical transmembrane segments spans residues 594–614 (FAIL…LNLM), 622–642 (AILS…PLAL), and 668–688 (VVLP…MGWI).

It belongs to the cation transport ATPase (P-type) (TC 3.A.3) family. Type IA subfamily. The system is composed of three essential subunits: KdpA, KdpB and KdpC.

Its subcellular location is the cell inner membrane. It carries out the reaction K(+)(out) + ATP + H2O = K(+)(in) + ADP + phosphate + H(+). Part of the high-affinity ATP-driven potassium transport (or Kdp) system, which catalyzes the hydrolysis of ATP coupled with the electrogenic transport of potassium into the cytoplasm. This subunit is responsible for energy coupling to the transport system and for the release of the potassium ions to the cytoplasm. The chain is Potassium-transporting ATPase ATP-binding subunit from Tolumonas auensis (strain DSM 9187 / NBRC 110442 / TA 4).